The sequence spans 432 residues: Adenylosuccinate synthetase (432 aa).

GTP-binding positions include Gly-13–Lys-19 and Gly-41–Thr-43. Residue Asp-14 is the Proton acceptor of the active site. Mg(2+) contacts are provided by Asp-14 and Gly-41. IMP contacts are provided by residues Asp-14–Lys-17, Asn-39–His-42, Thr-130, Arg-144, Gln-225, Thr-240, and Arg-304. The active-site Proton donor is His-42. Ala-300–Arg-306 is a substrate binding site. Residues Arg-306, Lys-332–Asp-334, and Ser-415–Gly-417 each bind GTP.

The protein belongs to the adenylosuccinate synthetase family. In terms of assembly, homodimer. Mg(2+) is required as a cofactor.

It localises to the cytoplasm. The enzyme catalyses IMP + L-aspartate + GTP = N(6)-(1,2-dicarboxyethyl)-AMP + GDP + phosphate + 2 H(+). It participates in purine metabolism; AMP biosynthesis via de novo pathway; AMP from IMP: step 1/2. Functionally, plays an important role in the de novo pathway of purine nucleotide biosynthesis. Catalyzes the first committed step in the biosynthesis of AMP from IMP. The protein is Adenylosuccinate synthetase of Salmonella agona (strain SL483).